A 120-amino-acid chain; its full sequence is uncharacterized protein (120 aa).

This is an uncharacterized protein from Bacillus subtilis (strain 168).